The following is a 299-amino-acid chain: MNQVEMTEFPVGKPQEALYGVASTPDGALWFTLAKGNAIGRLSPDGAVSRFPLPHTDGQPTTITCGPDGRPWFTLSSANAIGRLAPDGALRMFELPRPASRPFGIAGGHDGCLWFAEMAGDRIGRITIDGDIEEYDLPVKGGYPSCMAAGRDGLMWFTLNQAGAVGSISATAAPRIFPLGAADAAPVGIASDAQGALWIAQAGNGAIVRFDAGGRITEFPLHSRAARPHAIAADAAGNLWFTEWGANRIGRISEAGDLAGYELAAPGSEPHGIAIDPHGCVWAALETGRLVRLQASPRD.

Histidine 229 lines the substrate pocket. Glutamate 269 lines the Mg(2+) pocket. The active-site Proton acceptor is the histidine 271. Position 286 (glutamate 286) interacts with Mg(2+).

This sequence belongs to the Vgb family. In terms of assembly, monomer. It depends on Mg(2+) as a cofactor.

Functionally, inactivates the type B streptogramin antibiotics by linearizing the lactone ring at the ester linkage, generating a free phenylglycine carboxylate and converting the threonyl moiety into 2-amino-butenoic acid. The polypeptide is Virginiamycin B lyase (Bordetella parapertussis (strain 12822 / ATCC BAA-587 / NCTC 13253)).